The chain runs to 70 residues: Adenylate kinase (70 aa).

10–15 (GAGKGT) contributes to the ATP binding site. The segment at 30–59 (STGDLFRANISKQTELGKLAKSYMDKGELV) is NMP. AMP-binding positions include Thr31, Arg36, and 57–59 (ELV).

It belongs to the adenylate kinase family. Monomer.

The protein resides in the cytoplasm. The enzyme catalyses AMP + ATP = 2 ADP. Its pathway is purine metabolism; AMP biosynthesis via salvage pathway; AMP from ADP: step 1/1. Catalyzes the reversible transfer of the terminal phosphate group between ATP and AMP. Plays an important role in cellular energy homeostasis and in adenine nucleotide metabolism. This Streptomyces scabiei protein is Adenylate kinase (adk).